Reading from the N-terminus, the 211-residue chain is Holliday junction resolvase RecU (211 aa).

Residues Thr95, Asp97, Glu110, and Gln129 each contribute to the Mg(2+) site.

The protein belongs to the RecU family. Mg(2+) serves as cofactor.

The protein resides in the cytoplasm. It carries out the reaction Endonucleolytic cleavage at a junction such as a reciprocal single-stranded crossover between two homologous DNA duplexes (Holliday junction).. Its function is as follows. Endonuclease that resolves Holliday junction intermediates in genetic recombination. Cleaves mobile four-strand junctions by introducing symmetrical nicks in paired strands. Promotes annealing of linear ssDNA with homologous dsDNA. Required for DNA repair, homologous recombination and chromosome segregation. In Lactobacillus acidophilus (strain ATCC 700396 / NCK56 / N2 / NCFM), this protein is Holliday junction resolvase RecU.